We begin with the raw amino-acid sequence, 483 residues long: Glutamyl-tRNA(Gln) amidotransferase subunit A (483 aa).

Active-site charge relay system residues include Lys-76 and Ser-151. Ser-175 serves as the catalytic Acyl-ester intermediate.

It belongs to the amidase family. GatA subfamily. Heterotrimer of A, B and C subunits.

The catalysed reaction is L-glutamyl-tRNA(Gln) + L-glutamine + ATP + H2O = L-glutaminyl-tRNA(Gln) + L-glutamate + ADP + phosphate + H(+). Its function is as follows. Allows the formation of correctly charged Gln-tRNA(Gln) through the transamidation of misacylated Glu-tRNA(Gln) in organisms which lack glutaminyl-tRNA synthetase. The reaction takes place in the presence of glutamine and ATP through an activated gamma-phospho-Glu-tRNA(Gln). This is Glutamyl-tRNA(Gln) amidotransferase subunit A from Pseudomonas putida (strain ATCC 700007 / DSM 6899 / JCM 31910 / BCRC 17059 / LMG 24140 / F1).